The sequence spans 183 residues: Mast cell-expressed membrane protein 1 (183 aa).

Positions 1–26 are disordered; sequence MHASASQDKNRRKPGHDEGAHNPDYE. Topologically, residues 1 to 70 are cytoplasmic; the sequence is MHASASQDKN…PPWLYRTIMM (70 aa). Residues 15-24 are compositionally biased toward basic and acidic residues; the sequence is GHDEGAHNPD. A helical; Signal-anchor for type II membrane protein transmembrane segment spans residues 71-91; the sequence is LYVLLALVFLSCIVLSALVLV. Over 92 to 183 the chain is Extracellular; it reads KNSEMSKELW…EKKAQPQPST (92 aa). The N-linked (GlcNAc...) asparagine glycan is linked to Asn-109.

It localises to the membrane. The sequence is that of Mast cell-expressed membrane protein 1 from Mus musculus (Mouse).